Reading from the N-terminus, the 288-residue chain is Phosphatidylserine decarboxylase proenzyme (288 aa).

Residues Asp91, His148, and Ser254 each act as charge relay system; for autoendoproteolytic cleavage activity in the active site. Ser254 serves as the catalytic Schiff-base intermediate with substrate; via pyruvic acid; for decarboxylase activity. Position 254 is a pyruvic acid (Ser); by autocatalysis (Ser254).

This sequence belongs to the phosphatidylserine decarboxylase family. PSD-B subfamily. Prokaryotic type I sub-subfamily. As to quaternary structure, heterodimer of a large membrane-associated beta subunit and a small pyruvoyl-containing alpha subunit. Requires pyruvate as cofactor. Post-translationally, is synthesized initially as an inactive proenzyme. Formation of the active enzyme involves a self-maturation process in which the active site pyruvoyl group is generated from an internal serine residue via an autocatalytic post-translational modification. Two non-identical subunits are generated from the proenzyme in this reaction, and the pyruvate is formed at the N-terminus of the alpha chain, which is derived from the carboxyl end of the proenzyme. The autoendoproteolytic cleavage occurs by a canonical serine protease mechanism, in which the side chain hydroxyl group of the serine supplies its oxygen atom to form the C-terminus of the beta chain, while the remainder of the serine residue undergoes an oxidative deamination to produce ammonia and the pyruvoyl prosthetic group on the alpha chain. During this reaction, the Ser that is part of the protease active site of the proenzyme becomes the pyruvoyl prosthetic group, which constitutes an essential element of the active site of the mature decarboxylase.

It localises to the cell membrane. The catalysed reaction is a 1,2-diacyl-sn-glycero-3-phospho-L-serine + H(+) = a 1,2-diacyl-sn-glycero-3-phosphoethanolamine + CO2. The protein operates within phospholipid metabolism; phosphatidylethanolamine biosynthesis; phosphatidylethanolamine from CDP-diacylglycerol: step 2/2. Its function is as follows. Catalyzes the formation of phosphatidylethanolamine (PtdEtn) from phosphatidylserine (PtdSer). This chain is Phosphatidylserine decarboxylase proenzyme, found in Pseudoalteromonas translucida (strain TAC 125).